Here is a 393-residue protein sequence, read N- to C-terminus: Putative odorant receptor 69a, isoform B (393 aa).

At 1 to 39 the chain is on the cytoplasmic side; that stretch reads MQLEDFMRYPDLVCQAAQLPRYTWNGRRSLEVKRNLAKR. Residues 40–60 form a helical membrane-spanning segment; sequence IIFWLGAVNLVYHNIGCVMYG. The Extracellular segment spans residues 61 to 69; sequence YFGDGRTKD. Residues 70 to 90 form a helical membrane-spanning segment; it reads PIAYLAELASVASMLGFTIVG. The Cytoplasmic segment spans residues 91-138; the sequence is TLNLWKMLSLKTHFENLLNEFEELFQLIKHRAYRIHHYQEKYTRHIRN. The chain crosses the membrane as a helical span at residues 139 to 159; it reads TFIFHTSAVVYYNSLPILLMI. Residues 160–208 lie on the Extracellular side of the membrane; the sequence is REHFSNSQQLGYRIQSNTWYPWQVQGSIPGFFAAVACQIFSCQTNMCVN. Residues 209–229 form a helical membrane-spanning segment; that stretch reads MFIQFLINFFGIQLEIHFDGL. Residues 230–269 lie on the Cytoplasmic side of the membrane; that stretch reads ARQLETIDARNPHAKDQLKYLIVYHTKLLNLADRVNRSFN. A helical membrane pass occupies residues 270-290; the sequence is FTFLISLSVSMISNCFLAFSM. Topologically, residues 291–305 are extracellular; it reads TMFDFGTSLKHLLGL. The helical transmembrane segment at 306–326 threads the bilayer; that stretch reads LLFITYNFSMCRSGTHLILTS. The Cytoplasmic segment spans residues 327–365; that stretch reads GKVLPAAFYNNWYEGDLVYRRMLLILMMRATKPYMWKTY. A helical transmembrane segment spans residues 366–386; sequence KLAPVSITTYMATLKFSYQMF. The Extracellular portion of the chain corresponds to 387–393; the sequence is TCVRSLK.

This sequence belongs to the insect chemoreceptor superfamily. Heteromeric odorant receptor channel (TC 1.A.69) family. Or49a subfamily. In terms of assembly, interacts with Orco. Complexes exist early in the endomembrane system in olfactory sensory neurons (OSNs), coupling these complexes to the conserved ciliary trafficking pathway. Expressed in olfactory sensory neurons in the antenna.

Its subcellular location is the cell membrane. Functionally, odorant receptor which mediates acceptance or avoidance behavior, depending on its substrates. The odorant receptor repertoire encodes a large collection of odor stimuli that vary widely in identity, intensity, and duration. May form a complex with Orco to form odorant-sensing units, providing sensitive and prolonged odorant signaling and calcium permeability. This is Putative odorant receptor 69a, isoform B (Or69a) from Drosophila melanogaster (Fruit fly).